We begin with the raw amino-acid sequence, 70 residues long: UPF0426 protein ssl0294 (70 aa).

Belongs to the UPF0426 family.

This chain is UPF0426 protein ssl0294, found in Synechocystis sp. (strain ATCC 27184 / PCC 6803 / Kazusa).